The following is a 612-amino-acid chain: Chaperone protein DnaK (612 aa).

A Phosphothreonine; by autocatalysis modification is found at threonine 173. Positions 576–612 are disordered; sequence AAKQAQAQQDGGAGAKKADDNVVDAEYEEVNDDKDQK. The segment covering 596–612 has biased composition (acidic residues); sequence NVVDAEYEEVNDDKDQK.

The protein belongs to the heat shock protein 70 family.

Its function is as follows. Acts as a chaperone. The protein is Chaperone protein DnaK of Bacillus licheniformis (strain ATCC 14580 / DSM 13 / JCM 2505 / CCUG 7422 / NBRC 12200 / NCIMB 9375 / NCTC 10341 / NRRL NRS-1264 / Gibson 46).